Here is a 144-residue protein sequence, read N- to C-terminus: Transcriptional regulator SlyA (144 aa).

Residues 2-135 (ESPLGSDLAR…LIKLVAKLEH (134 aa)) enclose the HTH marR-type domain. A DNA-binding region (H-T-H motif) is located at residues 49-72 (QIQLAKAIGIEQPSLVRTLDQLED).

Belongs to the SlyA family. Homodimer.

Functionally, transcription regulator that can specifically activate or repress expression of target genes. Required to activate expression of virulent genes. This Salmonella choleraesuis (strain SC-B67) protein is Transcriptional regulator SlyA.